Consider the following 466-residue polypeptide: Ribulose bisphosphate carboxylase large chain (466 aa).

K5 bears the N6,N6,N6-trimethyllysine mark. Residues N114 and T164 each contribute to the substrate site. K166 acts as the Proton acceptor in catalysis. K168 contributes to the substrate binding site. 3 residues coordinate Mg(2+): K192, D194, and E195. At K192 the chain carries N6-carboxylysine. The active-site Proton acceptor is H285. The substrate site is built by R286, H318, and S370.

The protein belongs to the RuBisCO large chain family. Type I subfamily. Heterohexadecamer of 8 large chains and 8 small chains; disulfide-linked. The disulfide link is formed within the large subunit homodimers. Mg(2+) serves as cofactor. Post-translationally, the disulfide bond which can form in the large chain dimeric partners within the hexadecamer appears to be associated with oxidative stress and protein turnover.

It localises to the plastid. The protein localises to the chloroplast. The enzyme catalyses 2 (2R)-3-phosphoglycerate + 2 H(+) = D-ribulose 1,5-bisphosphate + CO2 + H2O. It catalyses the reaction D-ribulose 1,5-bisphosphate + O2 = 2-phosphoglycolate + (2R)-3-phosphoglycerate + 2 H(+). Its function is as follows. RuBisCO catalyzes two reactions: the carboxylation of D-ribulose 1,5-bisphosphate, the primary event in carbon dioxide fixation, as well as the oxidative fragmentation of the pentose substrate in the photorespiration process. Both reactions occur simultaneously and in competition at the same active site. The chain is Ribulose bisphosphate carboxylase large chain from Moringa oleifera (Horseradish tree).